Reading from the N-terminus, the 69-residue chain is Sec-independent protein translocase protein TatA (69 aa).

Residues 1 to 21 (MFGLGGQELVLILLIVLLLFG) traverse the membrane as a helical segment. Basic and acidic residues predominate over residues 47 to 63 (EEEFNKSMDDNPKKEKA). A disordered region spans residues 47-69 (EEEFNKSMDDNPKKEKATTASKS).

This sequence belongs to the TatA/E family. As to quaternary structure, forms a complex with TatC.

It localises to the cell inner membrane. Functionally, part of the twin-arginine translocation (Tat) system that transports large folded proteins containing a characteristic twin-arginine motif in their signal peptide across membranes. TatA could form the protein-conducting channel of the Tat system. The polypeptide is Sec-independent protein translocase protein TatA (Chlorobium chlorochromatii (strain CaD3)).